A 911-amino-acid polypeptide reads, in one-letter code: General transcription factor 3C polypeptide 2 (911 aa).

Disordered stretches follow at residues 34 to 187 (LDVK…RRRA) and 205 to 297 (ALPA…MAPN). Positions 35–46 (DVKTSSEMTSAE) are enriched in polar residues. Serine 63 is subject to Phosphoserine. Basic and acidic residues predominate over residues 64–81 (PDQRRLPPEQESLSRLEQ). Residues 92-112 (SKPRASKPGRKRGGRTRKGPK) show a composition bias toward basic residues. A compositionally biased stretch (pro residues) spans 114 to 123 (PQQPNPPSAP). Serine 132, serine 165, serine 167, serine 220, and serine 260 each carry phosphoserine. Over residues 253–262 (EAEDVEESEG) the composition is skewed to acidic residues. A compositionally biased stretch (low complexity) spans 263–275 (PSESSSEPEPAVP). 2 WD repeats span residues 465 to 521 (CDNG…ALLA) and 552 to 593 (SECG…PLQR). Serine 597 carries the post-translational modification Phosphoserine. Residues 611-651 (AHDQAVRTLQWCKANSHFLASAGSDRKIKFWDLRRPYEPIN) form a WD 3 repeat. The tract at residues 765–785 (SPEGPDHSSASSGVPNPPKAR) is disordered. The WD 4 repeat unit spans residues 832–874 (LQLEAIHKVRFSPNLDSYGWLVSGGQSGLVRIHFVRGLASPLG). Phosphoserine occurs at positions 871, 892, and 893. Positions 889–911 (FQPSSPTRRPGFSPTSHRLLPTP) are disordered. A Phosphothreonine modification is found at threonine 895. Serine 901 carries the post-translational modification Phosphoserine.

As to quaternary structure, part of the TFIIIC subcomplex TFIIIC2, consisting of six subunits, GTF3C1, GTF3C2, GTF3C3, GTF3C4, GTF3C5 and GTF3C6.

It localises to the nucleus. Its function is as follows. Required for RNA polymerase III-mediated transcription. Component of TFIIIC that initiates transcription complex assembly on tRNA and is required for transcription of 5S rRNA and other stable nuclear and cytoplasmic RNAs. May play a direct role in stabilizing interactions of TFIIIC2 with TFIIIC1. In Pongo abelii (Sumatran orangutan), this protein is General transcription factor 3C polypeptide 2 (GTF3C2).